A 96-amino-acid polypeptide reads, in one-letter code: Large ribosomal subunit protein bL21 (96 aa).

Belongs to the bacterial ribosomal protein bL21 family. Part of the 50S ribosomal subunit. Contacts protein L20.

In terms of biological role, this protein binds to 23S rRNA in the presence of protein L20. This chain is Large ribosomal subunit protein bL21, found in Sulfurihydrogenibium sp. (strain YO3AOP1).